A 266-amino-acid chain; its full sequence is MNLPASIPVRTFISGCHILHRHHVLDAYGHLSVRNPERSDTFFMSRDLAPGLISSSVDLVEYFVHDASPVNPASPAGYIERFIHSEIYQKYPEVQSVVHSHASTVLPYTITGVNLRPCVHMSGFLGASVPNFDVAKFYKEDDKCDLLIRNKDLGAHLAECFSAPESDSESTRSVVLMRGHGFTAVGGSIPESVYRAIYTVENAKIQTVSMTLSAAAAKGDGPHSGIYFLPEHEIRGTKELTQRSVMRSWKLWVREVETGGLYTNLA.

Residue glutamate 80 is the Proton acceptor of the active site. Zn(2+) is bound by residues glutamate 80, histidine 99, histidine 101, and histidine 180.

This sequence belongs to the aldolase class II family. Requires Zn(2+) as cofactor.

It participates in secondary metabolite biosynthesis. Decarboxylase; part of the gene cluster that mediates the biosynthesis of the tropolone class of fungal maleic anhydrides. The pathway begins with the synthesis of 3-methylorcinaldehyde by the non-reducing polyketide synthase (PKS) tropA. 3-methylorcinaldehyde is the substrate for the FAD-dependent monooxygenase tropB to yield a dearomatized hydroxycyclohexadione. The 2-oxoglutarate-dependent dioxygenase tropC then performs the oxidative ring expansion to provide the first tropolone metabolite stipitaldehyde. Trop D converts stipitaldehyde into stipitacetal which is in turn converted to stipitalide by the short-chain dehydrogenase/reductase tropE. The next steps involve tropF, tropG, tropH, tropI and tropJ to form successive tropolone maleic anhydrides including stipitaldehydic, stipitatonic and stipitatic acids. The protein is Decarboxylase tropJ of Talaromyces stipitatus (strain ATCC 10500 / CBS 375.48 / QM 6759 / NRRL 1006) (Penicillium stipitatum).